We begin with the raw amino-acid sequence, 325 residues long: NADH-quinone oxidoreductase subunit H (325 aa).

A run of 8 helical transmembrane segments spans residues 11–31 (VIIA…CGAF), 81–101 (VIFT…MAIV), 114–134 (IGLL…LFAG), 154–174 (LSYE…AGSF), 186–206 (LWNV…GVAV), 237–257 (FFVG…TLFF), 265–285 (LPPV…FILI), and 304–324 (VCLP…LYTA).

It belongs to the complex I subunit 1 family. NDH-1 is composed of 13 different subunits. Subunits NuoA, H, J, K, L, M, N constitute the membrane sector of the complex.

The protein resides in the cell inner membrane. The catalysed reaction is a quinone + NADH + 5 H(+)(in) = a quinol + NAD(+) + 4 H(+)(out). Functionally, NDH-1 shuttles electrons from NADH, via FMN and iron-sulfur (Fe-S) centers, to quinones in the respiratory chain. The immediate electron acceptor for the enzyme in this species is believed to be ubiquinone. Couples the redox reaction to proton translocation (for every two electrons transferred, four hydrogen ions are translocated across the cytoplasmic membrane), and thus conserves the redox energy in a proton gradient. This subunit may bind ubiquinone. This is NADH-quinone oxidoreductase subunit H from Erwinia tasmaniensis (strain DSM 17950 / CFBP 7177 / CIP 109463 / NCPPB 4357 / Et1/99).